The following is a 281-amino-acid chain: MEPLDTELCYDPDPSIVQPSCNGQTPPGHRTLSPTQQMDHEQQMKISESGQFSDVVENRGLLESSTRLKPHEAQNYRKKALWVSWLSIAITLILAIAAFTVSVMRYSASSFGFALDAVLDVLSSAIVLWRYSNAAAVHSAHREYMACCILGVIFLLSSICIVSKAIHDLSIRVMPEVDGFLFSVSILSGILCSLLAAIKFMLGKVLTSRALITDGFNSLVGGIMGFSILLSAEVYKHNSKVWYLDGSVGILIGLIIMSYGIKLLMDMVPRVRQTRHYEMFE.

Topologically, residues 1-80 are cytoplasmic; the sequence is MEPLDTELCY…HEAQNYRKKA (80 aa). The tract at residues 16-44 is disordered; it reads IVQPSCNGQTPPGHRTLSPTQQMDHEQQM. The chain crosses the membrane as a helical span at residues 81–101; that stretch reads LWVSWLSIAITLILAIAAFTV. Residues 102–108 lie on the Extracellular side of the membrane; the sequence is SVMRYSA. Residues 109–129 traverse the membrane as a helical segment; sequence SSFGFALDAVLDVLSSAIVLW. Residues 130–145 are Cytoplasmic-facing; the sequence is RYSNAAAVHSAHREYM. The chain crosses the membrane as a helical span at residues 146-166; the sequence is ACCILGVIFLLSSICIVSKAI. Over 167–179 the chain is Extracellular; sequence HDLSIRVMPEVDG. Residues 180–200 form a helical membrane-spanning segment; sequence FLFSVSILSGILCSLLAAIKF. Residues 201-209 are Cytoplasmic-facing; it reads MLGKVLTSR. A helical membrane pass occupies residues 210–230; it reads ALITDGFNSLVGGIMGFSILL. The Extracellular portion of the chain corresponds to 231–240; it reads SAEVYKHNSK. The chain crosses the membrane as a helical span at residues 241 to 261; that stretch reads VWYLDGSVGILIGLIIMSYGI. Topologically, residues 262–281 are cytoplasmic; that stretch reads KLLMDMVPRVRQTRHYEMFE.

The protein belongs to the TMEM163 family.

The protein resides in the cytoplasmic vesicle. It is found in the secretory vesicle. Its subcellular location is the synaptic vesicle membrane. The protein localises to the early endosome membrane. May bind zinc and other divalent cations and recruit them to vesicular organelles. The sequence is that of Transmembrane protein 163 (tmem163) from Xenopus laevis (African clawed frog).